A 254-amino-acid chain; its full sequence is Triosephosphate isomerase 2 (254 aa).

9 to 11 (NMK) contacts substrate. His-96 acts as the Electrophile in catalysis. Glu-168 (proton acceptor) is an active-site residue. Residues Gly-174 and Ser-212 each contribute to the substrate site.

The protein belongs to the triosephosphate isomerase family. Homodimer.

Its subcellular location is the cytoplasm. The catalysed reaction is D-glyceraldehyde 3-phosphate = dihydroxyacetone phosphate. Its pathway is polyol metabolism; glycerol degradation. Involved in the glycerol metabolism. Catalyzes stereospecifically the conversion of dihydroxyacetone phosphate (DHAP) to D-glyceraldehyde-3-phosphate (G3P). In Listeria innocua serovar 6a (strain ATCC BAA-680 / CLIP 11262), this protein is Triosephosphate isomerase 2.